A 99-amino-acid chain; its full sequence is Small ribosomal subunit protein eS24 (99 aa).

The protein belongs to the eukaryotic ribosomal protein eS24 family.

The chain is Small ribosomal subunit protein eS24 from Pyrococcus abyssi (strain GE5 / Orsay).